Here is a 757-residue protein sequence, read N- to C-terminus: Dolichyl-diphosphooligosaccharide--protein glycosyltransferase subunit stt-3 (757 aa).

Topologically, residues 1–13 (MTSTTAARTASSR) are cytoplasmic. The helical transmembrane segment at 14–34 (VGATTLLTIVVLALAWFVGFA) threads the bilayer. At 35 to 121 (SRLFAIVRFE…VHIREVCVFL (87 aa)) the chain is on the lumenal side. The DXD motif 1 motif lies at 49–51 (EFD). Mn(2+) is bound at residue Asp51. A helical membrane pass occupies residues 122-140 (APTFSGLTAIATYLLTKEL). Topologically, residues 141–142 (WS) are cytoplasmic. A helical membrane pass occupies residues 143–160 (PGAGLFAACFIAISPGYT). Over 161–171 (SRSVAGSYDNE) the chain is Lumenal. 2 residues coordinate Mn(2+): Asp169 and Glu171. Positions 169–171 (DNE) match the DXD motif 2 motif. A helical transmembrane segment spans residues 172-191 (GIAIFALQFTYYLWVKSLKT). At 192 to 193 (GS) the chain is on the cytoplasmic side. A helical transmembrane segment spans residues 194-208 (IMWASLCALSYFYMV). Over 209–210 (SA) the chain is Lumenal. A run of 2 helical transmembrane segments spans residues 211–235 (WGGY…GRYS) and 236–261 (SRLF…FVGF). Over 262–269 (QPVRTSEH) the chain is Lumenal. Residues 270–289 (MPAFGVFGLLQIVALMHYAR) form a helical membrane-spanning segment. The Cytoplasmic segment spans residues 290–299 (NRITRQQFMT). A helical membrane pass occupies residues 300 to 320 (LFVGGLTILGALSVVVYFALV). Residues 321-358 (WGGYVAPFSGRFYSLWDTGYAKIHIPIIASVSEHQPTT) lie on the Lumenal side of the membrane. The SVSE motif motif lies at 350-353 (SVSE). The chain crosses the membrane as a helical span at residues 359–381 (WVSFFFDLHITAAVFPVGLWYCI). Over 382–387 (KKVNDE) the chain is Cytoplasmic. Residues 388 to 404 (RVFIILYAVSAVYFAGV) form a helical membrane-spanning segment. The Lumenal segment spans residues 405–408 (MVRL). Arg407 is a dolichyl diphosphooligosaccharide binding site. A helical transmembrane segment spans residues 409–430 (MLTLTPAVCVLAGIGFSYTFEK). At 431-469 (YLKDEETKERSSSQSGTTKDEKLYDKAAKNVKSRNANDG) the chain is on the cytoplasmic side. The helical transmembrane segment at 470-495 (DESGVSSNVRTIISIILVIFLLMFVV) threads the bilayer. Topologically, residues 496-757 (HATYVTSNAY…IRPAPTASKA (262 aa)) are lumenal. Residues 547–549 (WWD) form an interacts with target acceptor peptide in protein substrate region. Residues 547 to 551 (WWDYG) carry the WWDYG motif motif. Tyr552 contacts dolichyl diphosphooligosaccharide. 2 N-linked (GlcNAc...) asparagine glycosylation sites follow: Asn559 and Asn566. A glycan (N-linked (GlcNAc...) (high mannose) asparagine) is linked at Asn570. An N-linked (GlcNAc...) asparagine glycan is attached at Asn584. Positions 614–621 (DINKFLWM) match the DK motif motif. The interval 721–757 (RPTVKSEEATIPIKGKKATQGKNKKGVIRPAPTASKA) is disordered. The span at 734-747 (KGKKATQGKNKKGV) shows a compositional bias: basic residues.

The protein belongs to the STT3 family. As to quaternary structure, component of the oligosaccharyltransferase (OST) complex. It depends on Mg(2+) as a cofactor. Mn(2+) serves as cofactor.

The protein resides in the endoplasmic reticulum membrane. It carries out the reaction a di-trans,poly-cis-dolichyl diphosphooligosaccharide + L-asparaginyl-[protein] = N(4)-(oligosaccharide-(1-&gt;4)-N-acetyl-beta-D-glucosaminyl-(1-&gt;4)-N-acetyl-beta-D-glucosaminyl)-L-asparaginyl-[protein] + a di-trans,poly-cis-dolichyl diphosphate + H(+). The protein operates within protein modification; protein glycosylation. Its function is as follows. Catalytic subunit of the oligosaccharyl transferase (OST) complex that catalyzes the initial transfer of a defined glycan (Glc(3)Man(9)GlcNAc(2) in eukaryotes) from the lipid carrier dolichol-pyrophosphate to an asparagine residue within an Asn-X-Ser/Thr consensus motif in nascent polypeptide chains, the first step in protein N-glycosylation. N-glycosylation occurs cotranslationally and the complex associates with the Sec61 complex at the channel-forming translocon complex that mediates protein translocation across the endoplasmic reticulum (ER). All subunits are required for a maximal enzyme activity. This subunit contains the active site and the acceptor peptide and donor lipid-linked oligosaccharide (LLO) binding pockets. The sequence is that of Dolichyl-diphosphooligosaccharide--protein glycosyltransferase subunit stt-3 from Caenorhabditis elegans.